The chain runs to 98 residues: Large ribosomal subunit protein bL27 (98 aa).

The propeptide occupies 1–9 (MLKMNLQLF).

The protein belongs to the bacterial ribosomal protein bL27 family. Post-translationally, the N-terminus is cleaved by ribosomal processing cysteine protease Prp.

This chain is Large ribosomal subunit protein bL27, found in Desulfitobacterium hafniense (strain DSM 10664 / DCB-2).